Consider the following 249-residue polypeptide: Probable GDP-mannose transporter 2 (249 aa).

At 1-15 (MIYTSSKSLQYLAVP) the chain is on the lumenal side. Residues 16-36 (IYTIFKNLTIILIAYGEVLFF) form a helical membrane-spanning segment. Topologically, residues 37–47 (GGKVTSMELTS) are cytoplasmic. A helical transmembrane segment spans residues 48–68 (FIMMVLSSVVATWGDQQAIAI). The Lumenal segment spans residues 69–84 (KASSLEDLDQELVEST). Residues 85 to 105 (IFVLNPGYLWMFTNCISSALF) form a helical membrane-spanning segment. Over 106-122 (VLIMRKRIRLTNFKDYD) the chain is Cytoplasmic. Residues 123 to 143 (TMFYNNVLALPLLLVFSFIME) traverse the membrane as a helical segment. Over 144-159 (DWSTKNLSVNLSADSL) the chain is Lumenal. N-linked (GlcNAc...) asparagine glycans are attached at residues asparagine 149 and asparagine 153. Residues 160-180 (AAMVISGLMSVGISYCSGWCV) form a helical membrane-spanning segment. Over 181-186 (RVTSST) the chain is Cytoplasmic. Residues 187–207 (TYSMVGALNKLPIALAGLVFF) traverse the membrane as a helical segment. Over 208–211 (DAPK) the chain is Lumenal. The helical transmembrane segment at 212–232 (NFLSFFSIFLGFLSGLLYAVA) threads the bilayer. The Cytoplasmic segment spans residues 233–249 (KQKKIQQQKVLAATLEK).

This sequence belongs to the TPT transporter family. SLC35D subfamily.

It is found in the golgi apparatus membrane. It localises to the cytoplasmic vesicle membrane. The protein resides in the endoplasmic reticulum membrane. Involved in the import of GDP-mannose from the cytoplasm into the Golgi lumen. The polypeptide is Probable GDP-mannose transporter 2 (HVG1) (Saccharomyces cerevisiae (strain RM11-1a) (Baker's yeast)).